Reading from the N-terminus, the 2280-residue chain is Acetyl-CoA carboxylase (2280 aa).

The region spanning 68–577 is the Biotin carboxylation domain; it reads VITSILIANN…TTGWLDRLIA (510 aa). The ATP-grasp domain maps to 226 to 418; sequence ETNIVTVDDD…LPAAQLQVAM (193 aa). 266–271 contributes to the ATP binding site; sequence GGGGKG. Glu-375, Glu-389, and Asn-391 together coordinate Mn(2+). The active site involves Arg-393. The 75-residue stretch at 704-778 folds into the Biotinyl-binding domain; the sequence is LEQENDPTQL…DAGDILGILT (75 aa). Lys-745 bears the N6-biotinyllysine mark. Phosphoserine is present on residues Ser-1179 and Ser-1181. The CoA carboxyltransferase N-terminal domain occupies 1524–1863; sequence PYPTKEWLQP…KRNNPVPISP (340 aa). The tract at residues 1524 to 2181 is carboxyltransferase; the sequence is PYPTKEWLQP…EHYALQKITQ (658 aa). Residues Arg-1772, Lys-2074, and Arg-2076 each contribute to the CoA site. One can recognise a CoA carboxyltransferase C-terminal domain in the interval 1867 to 2181; it reads TWDRDVEFYP…EHYALQKITQ (315 aa).

As to quaternary structure, interacts with sad1. It depends on biotin as a cofactor. The cofactor is Mn(2+).

The protein resides in the cytoplasm. It carries out the reaction hydrogencarbonate + acetyl-CoA + ATP = malonyl-CoA + ADP + phosphate + H(+). The catalysed reaction is N(6)-biotinyl-L-lysyl-[protein] + hydrogencarbonate + ATP = N(6)-carboxybiotinyl-L-lysyl-[protein] + ADP + phosphate + H(+). Its pathway is lipid metabolism; malonyl-CoA biosynthesis; malonyl-CoA from acetyl-CoA: step 1/1. Its activity is regulated as follows. By phosphorylation. In terms of biological role, carries out three functions: biotin carboxyl carrier protein, biotin carboxylase and carboxyltransferase. The chain is Acetyl-CoA carboxylase (cut6) from Schizosaccharomyces pombe (strain 972 / ATCC 24843) (Fission yeast).